The following is a 348-amino-acid chain: GMP reductase 2 (348 aa).

NADP(+) contacts are provided by residues 26 to 27 (SR), Lys-78, 129 to 131 (DVA), and 180 to 181 (IG). Gly-181, Gly-183, and Cys-186 together coordinate K(+). Cys-186 functions as the Thioimidate intermediate in the catalytic mechanism. The active-site Proton donor/acceptor is Thr-188. Arg-189 provides a ligand contact to K(+). Residues 219 to 221 (DGG), 242 to 243 (GG), 268 to 270 (GMS), and 286 to 290 (RASEG) contribute to the GMP site. NADP(+)-binding positions include Met-269 and 285–286 (YR). Lys-291 carries the post-translational modification N6-acetyllysine. Position 314–317 (314–317 (STCT)) interacts with NADP(+).

This sequence belongs to the IMPDH/GMPR family. GuaC type 1 subfamily. As to quaternary structure, homotetramer. As to expression, highly expressed in heart, skeletal muscle, kidney, brain, liver, prostate, spleen, placenta, testis and ovary. Low expression in colon, thymus and peripheral blood leukocytes.

It carries out the reaction IMP + NH4(+) + NADP(+) = GMP + NADPH + 2 H(+). Catalyzes the irreversible NADPH-dependent deamination of GMP to IMP. It functions in the conversion of nucleobase, nucleoside and nucleotide derivatives of G to A nucleotides, and in maintaining the intracellular balance of A and G nucleotides. Plays a role in modulating cellular differentiation. The protein is GMP reductase 2 of Homo sapiens (Human).